A 253-amino-acid chain; its full sequence is uncharacterized protein (253 aa).

The interval 211 to 241 (TTRRKRYREDRDSGEDLGAESKRGNGSVRYT) is disordered.

This is an uncharacterized protein from Ictalurid herpesvirus 1 (strain Auburn) (IcHV-1).